The sequence spans 210 residues: Chaperone protein TorD (210 aa).

This sequence belongs to the TorD/DmsD family. TorD subfamily.

It is found in the cytoplasm. Its function is as follows. Involved in the biogenesis of TorA. Acts on TorA before the insertion of the molybdenum cofactor and, as a result, probably favors a conformation of the apoenzyme that is competent for acquiring the cofactor. This Salmonella agona (strain SL483) protein is Chaperone protein TorD.